The following is a 368-amino-acid chain: Putative J domain-containing protein R445 (368 aa).

Residues 13 to 83 (DLYKILGLTN…KQRNEYNQRL (71 aa)) form the J domain.

In Acanthamoeba polyphaga mimivirus (APMV), this protein is Putative J domain-containing protein R445.